Reading from the N-terminus, the 132-residue chain is Acid shock protein (132 aa).

Residues 1–21 form the signal peptide; the sequence is MKKVLALVVAAAMGLSSAAFA. Over residues 20-45 the composition is skewed to low complexity; that stretch reads FAAETTTSSAAPATATATTTKAAPAK. A disordered region spans residues 20–132; that stretch reads FAAETTTSSA…AAKPAAQPAA (113 aa). Residues 22–90 constitute a propeptide that is removed on maturation; the sequence is AETTTSSAAP…TTAPVEQKAQ (69 aa). Basic residues predominate over residues 62–71; that stretch reads AAKKHHKKAV. Low complexity-rich tracts occupy residues 76–90 and 100–109; these read AAPA…QKAQ and AKPAVAQKAQ. Positions 110–119 are enriched in basic residues; sequence AAKKHHKKAV.

Belongs to the Asr family. Post-translationally, proteolytic processing gives rise to the active protein.

It is found in the periplasm. Functionally, required for growth and/or survival at acidic conditions. The chain is Acid shock protein from Enterobacter sp. (strain 638).